Reading from the N-terminus, the 73-residue chain is Large ribosomal subunit protein bL31 (73 aa).

Residues Cys16, Cys18, Cys36, and Cys39 each coordinate Zn(2+).

Belongs to the bacterial ribosomal protein bL31 family. Type A subfamily. In terms of assembly, part of the 50S ribosomal subunit. Zn(2+) serves as cofactor.

Binds the 23S rRNA. The chain is Large ribosomal subunit protein bL31 from Citrifermentans bemidjiense (strain ATCC BAA-1014 / DSM 16622 / JCM 12645 / Bem) (Geobacter bemidjiensis).